Reading from the N-terminus, the 722-residue chain is MGPKAKKSGSKKKKVTKAERLKLLQEEEDRRLKEEEEARLKYEKEEMERLEIQRIEKEKWNRLEAKDLERRNEELEELYLLERCFPEAEKLKQETRMLSQWKHYIQCDGSPDPSIAQEMNTFISLWKEKTNETFEEVIEKSKVVLNLIEKLKFILLETPLCDLQDKNIIQYQESILQLQELLHLKFNVATEILLRQASTLADLDSGNMEKVIKDENVTLYVWANLKKNPRHRSVRFSETQIGFEIPRILATSDIAVRLLHTHYDHVSALHPVSTPSKEHTSSATELVKDDVENVEKAISKEVEEESKQQEKQSHLIQEEKLKVEEEQDDIEVKMGSAEEESEAIKCELEMKVLSETVSAAQLLLVENSSEKPDFFENDMVDLFQFTTLGGVYHLDILELPPQCKPVKGWMIVEILKEGLQKYTYPPETTEDFETENAFPPIEVTLEVHENVIFFENPMVVRWDAEGKHWRTDGISNVSYKPNERLITFSLDTFGPVTLIQDAHINMPYQSWELRPLDVNKVLLTVTTVFTEIQIQIKENLCMLSSVKLKDKKHISILEGTWMTPIPFIIALKEAGLNIFPTRYSHFYVVINNKVPLVEVKAYRQMALLSSTFAFGWSKWNLLCNSTKVVFKVREHLPEECTENPNWALLMFSGDRAQRLKIKEESEAFSEALKEETEFHSTLYHMVRDFASKEAMEKVRSSNCQFVNSVCHMLLSTRLLSYS.

Basic residues predominate over residues 1 to 15 (MGPKAKKSGSKKKKV). The tract at residues 1-20 (MGPKAKKSGSKKKKVTKAER) is disordered.

Belongs to the DNAI7 family. As to quaternary structure, part of the multisubunit axonemal dynein complex formed at least of two heavy chains and a number of intermediate and light chains. Associates with tubulin. Interacts with microtubule. Post-translationally, ubiquitinated. Ubiquitination leads to its degradation through the 26S proteasome. Ubiquitin-proteasome-mediated DNAI7 degradation occurs in mitosis.

The protein localises to the cell projection. Its subcellular location is the cilium. It is found in the cytoplasm. Functionally, via its association with the multisubunit axonemal dynein complex, is potentially involved in the regulation of cilia function. May act as a cell cycle regulator. The protein is Dynein axonemal intermediate chain 7 of Macaca fascicularis (Crab-eating macaque).